The sequence spans 62 residues: Weak neurotoxin 5 (62 aa).

5 disulfides stabilise this stretch: Cys-3–Cys-24, Cys-6–Cys-11, Cys-17–Cys-40, Cys-44–Cys-54, and Cys-55–Cys-60.

It belongs to the three-finger toxin family. Ancestral subfamily. Orphan group II sub-subfamily. As to expression, expressed by the venom gland.

It localises to the secreted. Binds with low affinity to muscular (alpha-1-beta-1-delta-epsilon/CHRNA1-CHRNB1-CHRND-CHRNE) and very low affinity to neuronal (alpha-7/CHRNA7) nicotinic acetylcholine receptor (nAChR). This chain is Weak neurotoxin 5, found in Naja naja (Indian cobra).